A 291-amino-acid polypeptide reads, in one-letter code: RPE-retinal G protein-coupled receptor (291 aa).

The Extracellular segment spans residues 1–15 (MAESGTLPTGFGELE). A helical transmembrane segment spans residues 16 to 36 (VLAVGTVLLVEALSGLSLNIL). The Cytoplasmic portion of the chain corresponds to 37-52 (TILSFCKTPELRTPSH). Residues 53–73 (LLVLSLALADSGISLNALVAA) traverse the membrane as a helical segment. Residues 74–91 (TSSLLRRWPYGSEGCQAH) are Extracellular-facing. Cysteine 88 and cysteine 162 form a disulfide bridge. The helical transmembrane segment at 92 to 112 (GFQGFVTALASICSSAAVAWG) threads the bilayer. Over 113–130 (RYHHFCTRSRLDWNTAVS) the chain is Cytoplasmic. A helical transmembrane segment spans residues 131–151 (LVFFVWLSSAFWAALPLLGWG). Residues 152 to 175 (HYDYEPLGTCCTLDYSRGDRNFTS) are Extracellular-facing. Residue asparagine 172 is glycosylated (N-linked (GlcNAc...) asparagine). Residues 176–196 (FLFTMAFFNFLLPLFITVVSY) form a helical membrane-spanning segment. Topologically, residues 197–219 (RLMEQKLGKTSRPPVNTVLPART) are cytoplasmic. Residues 220–240 (LLLGWGPYALLYLYATIADAT) traverse the membrane as a helical segment. Over 241–247 (SISPKLQ) the chain is Extracellular. The chain crosses the membrane as a helical span at residues 248 to 268 (MVPALIAKAVPTVNAMNYALG). Lysine 255 is subject to N6-(retinylidene)lysine. The Cytoplasmic segment spans residues 269–291 (SEMVHRGIWQCLSPQRREHSREQ).

The protein belongs to the G-protein coupled receptor 1 family. Opsin subfamily. Post-translationally, covalently binds all-trans- and 11-cis-retinal. Preferentially expressed at high levels in the retinal pigment epithelium (RPE) and Mueller cells of the neural retina.

Its subcellular location is the membrane. In terms of biological role, receptor for all-trans- and 11-cis-retinal. Binds preferentially to the former and may catalyze the isomerization of the chromophore by a retinochrome-like mechanism. This is RPE-retinal G protein-coupled receptor (RGR) from Bos taurus (Bovine).